Here is a 38-residue protein sequence, read N- to C-terminus: Photosystem II reaction center protein L (38 aa).

Residues 17–37 (SLYWGLLLIFVLAVLFSSYFF) form a helical membrane-spanning segment.

Belongs to the PsbL family. PSII is composed of 1 copy each of membrane proteins PsbA, PsbB, PsbC, PsbD, PsbE, PsbF, PsbH, PsbI, PsbJ, PsbK, PsbL, PsbM, PsbT, PsbX, PsbY, PsbZ, Psb30/Ycf12, at least 3 peripheral proteins of the oxygen-evolving complex and a large number of cofactors. It forms dimeric complexes.

It localises to the plastid. The protein localises to the chloroplast thylakoid membrane. One of the components of the core complex of photosystem II (PSII). PSII is a light-driven water:plastoquinone oxidoreductase that uses light energy to abstract electrons from H(2)O, generating O(2) and a proton gradient subsequently used for ATP formation. It consists of a core antenna complex that captures photons, and an electron transfer chain that converts photonic excitation into a charge separation. This subunit is found at the monomer-monomer interface and is required for correct PSII assembly and/or dimerization. The protein is Photosystem II reaction center protein L of Thalassiosira pseudonana (Marine diatom).